The following is a 346-amino-acid chain: Holliday junction branch migration complex subunit RuvB (346 aa).

The segment at 1–182 is large ATPase domain (RuvB-L); sequence MSEPARLISP…FGIPVRLSFY (182 aa). ATP contacts are provided by residues Leu21, Arg22, Gly63, Lys66, Thr67, Thr68, 129–131, Arg172, Tyr182, and Arg219; that span reads EDF. Thr67 is a binding site for Mg(2+). A small ATPAse domain (RuvB-S) region spans residues 183-253; that stretch reads TVEELELIVR…IADEALTRLL (71 aa). Residues 256-346 form a head domain (RuvB-H) region; the sequence is NVGFDQLDKR…AQFRLFQEDN (91 aa). Residues Arg292, Arg311, and Arg316 each contribute to the DNA site.

The protein belongs to the RuvB family. Homohexamer. Forms an RuvA(8)-RuvB(12)-Holliday junction (HJ) complex. HJ DNA is sandwiched between 2 RuvA tetramers; dsDNA enters through RuvA and exits via RuvB. An RuvB hexamer assembles on each DNA strand where it exits the tetramer. Each RuvB hexamer is contacted by two RuvA subunits (via domain III) on 2 adjacent RuvB subunits; this complex drives branch migration. In the full resolvosome a probable DNA-RuvA(4)-RuvB(12)-RuvC(2) complex forms which resolves the HJ.

The protein localises to the cytoplasm. The catalysed reaction is ATP + H2O = ADP + phosphate + H(+). In terms of biological role, the RuvA-RuvB-RuvC complex processes Holliday junction (HJ) DNA during genetic recombination and DNA repair, while the RuvA-RuvB complex plays an important role in the rescue of blocked DNA replication forks via replication fork reversal (RFR). RuvA specifically binds to HJ cruciform DNA, conferring on it an open structure. The RuvB hexamer acts as an ATP-dependent pump, pulling dsDNA into and through the RuvAB complex. RuvB forms 2 homohexamers on either side of HJ DNA bound by 1 or 2 RuvA tetramers; 4 subunits per hexamer contact DNA at a time. Coordinated motions by a converter formed by DNA-disengaged RuvB subunits stimulates ATP hydrolysis and nucleotide exchange. Immobilization of the converter enables RuvB to convert the ATP-contained energy into a lever motion, pulling 2 nucleotides of DNA out of the RuvA tetramer per ATP hydrolyzed, thus driving DNA branch migration. The RuvB motors rotate together with the DNA substrate, which together with the progressing nucleotide cycle form the mechanistic basis for DNA recombination by continuous HJ branch migration. Branch migration allows RuvC to scan DNA until it finds its consensus sequence, where it cleaves and resolves cruciform DNA. The chain is Holliday junction branch migration complex subunit RuvB from Rhizobium johnstonii (strain DSM 114642 / LMG 32736 / 3841) (Rhizobium leguminosarum bv. viciae).